Reading from the N-terminus, the 545-residue chain is Beta-sesquiphellandrene synthase (545 aa).

Mg(2+) contacts are provided by D299, D303, N443, S447, and E451. The DDXXD motif signature appears at 299-303 (DDIMD).

This sequence belongs to the terpene synthase family. The cofactor is Mg(2+). Requires Mn(2+) as cofactor.

The protein resides in the cytoplasm. The enzyme catalyses (2E,6E)-farnesyl diphosphate = beta-sesquiphellandrene + diphosphate. It functions in the pathway secondary metabolite biosynthesis; terpenoid biosynthesis. Functionally, sesquiterpene synthase converting farnesyl diphosphate into beta-sesquiphellandrene and six minor products, zingiberene, 7-epi-sesquithujene, sesquisabinene A, (E)-alpha-bergamotene, (E)-beta-farnesene and beta-bisabolene. Can also accept geranyl diphosphate as substrate, producing nine monoterpenes, with myrcene and limonene as the major products. In Sorghum bicolor (Sorghum), this protein is Beta-sesquiphellandrene synthase (TPS2).